The chain runs to 275 residues: 3-methyl-2-oxobutanoate hydroxymethyltransferase (275 aa).

Residues aspartate 49 and aspartate 88 each coordinate Mg(2+). Residues 49–50 (DS), aspartate 88, and lysine 118 contribute to the 3-methyl-2-oxobutanoate site. Glutamate 120 serves as a coordination point for Mg(2+). The active-site Proton acceptor is glutamate 187.

Belongs to the PanB family. In terms of assembly, homodecamer; pentamer of dimers. Requires Mg(2+) as cofactor.

The protein resides in the cytoplasm. It carries out the reaction 3-methyl-2-oxobutanoate + (6R)-5,10-methylene-5,6,7,8-tetrahydrofolate + H2O = 2-dehydropantoate + (6S)-5,6,7,8-tetrahydrofolate. It participates in cofactor biosynthesis; (R)-pantothenate biosynthesis; (R)-pantoate from 3-methyl-2-oxobutanoate: step 1/2. Functionally, catalyzes the reversible reaction in which hydroxymethyl group from 5,10-methylenetetrahydrofolate is transferred onto alpha-ketoisovalerate to form ketopantoate. This is 3-methyl-2-oxobutanoate hydroxymethyltransferase from Bartonella quintana (strain Toulouse) (Rochalimaea quintana).